A 315-amino-acid polypeptide reads, in one-letter code: Beta-ketoacyl-[acyl-carrier-protein] synthase III 2 (315 aa).

Catalysis depends on residues C113 and H241. The interval 242-246 (QANLR) is ACP-binding. N271 is a catalytic residue.

The protein belongs to the thiolase-like superfamily. FabH family. As to quaternary structure, homodimer.

The protein resides in the cytoplasm. The enzyme catalyses malonyl-[ACP] + acetyl-CoA + H(+) = 3-oxobutanoyl-[ACP] + CO2 + CoA. Its pathway is lipid metabolism; fatty acid biosynthesis. In terms of biological role, catalyzes the condensation reaction of fatty acid synthesis by the addition to an acyl acceptor of two carbons from malonyl-ACP. Catalyzes the first condensation reaction which initiates fatty acid synthesis and may therefore play a role in governing the total rate of fatty acid production. Possesses both acetoacetyl-ACP synthase and acetyl transacylase activities. Its substrate specificity determines the biosynthesis of branched-chain and/or straight-chain of fatty acids. The protein is Beta-ketoacyl-[acyl-carrier-protein] synthase III 2 of Streptomyces avermitilis (strain ATCC 31267 / DSM 46492 / JCM 5070 / NBRC 14893 / NCIMB 12804 / NRRL 8165 / MA-4680).